The chain runs to 126 residues: Large ribosomal subunit protein uL22 (126 aa).

This sequence belongs to the universal ribosomal protein uL22 family. As to quaternary structure, part of the 50S ribosomal subunit.

Its function is as follows. This protein binds specifically to 23S rRNA; its binding is stimulated by other ribosomal proteins, e.g. L4, L17, and L20. It is important during the early stages of 50S assembly. It makes multiple contacts with different domains of the 23S rRNA in the assembled 50S subunit and ribosome. Functionally, the globular domain of the protein is located near the polypeptide exit tunnel on the outside of the subunit, while an extended beta-hairpin is found that lines the wall of the exit tunnel in the center of the 70S ribosome. This Jannaschia sp. (strain CCS1) protein is Large ribosomal subunit protein uL22.